A 734-amino-acid chain; its full sequence is MALRFPRFSQGLAQDPTTRRIWFGIATAHDFESHDDITEERLYQNIFASHFGQLAIIFLWTSGNLFHVAWQGNFESWVQDPLHVRPIAHAIWDPHFGQPAVEAFTRGGALGPVNIAYSGVYQWWYTIGLRTNEDLYTGALFLLLISAISLIAGWLHLQPKWKPSVSWFKNAESRLNHHLSGLFGVSSLAWTGHLVHVAIPASRGEYVRWNNFLDVLPHPQGLGPLFTGQWNLYAQNPDSGSHLFGTSQGAGTAILTLLGGFHPQTQSLWLTDMAHHHLAIAFLFLIAGHMYRTNFGIGHSMKDLLDAHIPPGGRLGRGHKGLYDTINNSLHFQLGLALASLGVITSLVAQHMYSLPAYAFIAQDFTTQAALYTHHQYIAGFIMTGAFAHGAIFFIRDYNPEQNEDNVLARMLEHKEAIISHLSWASLFLGFHTLGLYVHNDVMLAFGTPEKQILIEPIFAQWIQSAHGKTSYGFDILLSSTNGPAFNAGRSIWLPGWLNAINENSNSLFLTIGPGDFLVHHAIALGLHTTTLILVKGALDARGSKLMPDKKDFGYSFPCDGPGRGGTCDISAWDAFYLAVFWMLNTIGWVTFYWHWKHITLWQGNVSQFNESSTYLMGWLRDYLWLNSSQLINGYNPFGMNSLSVWAWMFLFGHLVWATGFMFLISWRGYWQELIETLAWAHERTPLANLIRWRDKPVALSIVQARLVGLAHFSVGYIFTYAAFLIASTSGKFG.

The next 8 membrane-spanning stretches (helical) occupy residues 46-69, 135-158, 175-199, 273-291, 330-353, 369-395, 417-439, and 517-535; these read IFASHFGQLAIIFLWTSGNLFHVA, LYTGALFLLLISAISLIAGWLHLQ, LNHHLSGLFGVSSLAWTGHLVHVAI, MAHHHLAIAFLFLIAGHMY, LHFQLGLALASLGVITSLVAQHMY, AALYTHHQYIAGFIMTGAFAHGAIFFI, AIISHLSWASLFLGFHTLGLYVH, and FLVHHAIALGLHTTTLILV. [4Fe-4S] cluster-binding residues include cysteine 559 and cysteine 568. A run of 2 helical transmembrane segments spans residues 575-596 and 643-665; these read AFYLAVFWMLNTIGWVTFYWHW and LSVWAWMFLFGHLVWATGFMFLI. Chlorophyll a is bound by residues histidine 654, methionine 662, and tyrosine 670. Tryptophan 671 serves as a coordination point for phylloquinone. Residues 707-727 traverse the membrane as a helical segment; it reads LVGLAHFSVGYIFTYAAFLIA.

Belongs to the PsaA/PsaB family. In terms of assembly, the PsaA/B heterodimer binds the P700 chlorophyll special pair and subsequent electron acceptors. PSI consists of a core antenna complex that captures photons, and an electron transfer chain that converts photonic excitation into a charge separation. The eukaryotic PSI reaction center is composed of at least 11 subunits. P700 is a chlorophyll a/chlorophyll a' dimer, A0 is one or more chlorophyll a, A1 is one or both phylloquinones and FX is a shared 4Fe-4S iron-sulfur center. is required as a cofactor.

The protein localises to the plastid. Its subcellular location is the chloroplast thylakoid membrane. It carries out the reaction reduced [plastocyanin] + hnu + oxidized [2Fe-2S]-[ferredoxin] = oxidized [plastocyanin] + reduced [2Fe-2S]-[ferredoxin]. Its function is as follows. PsaA and PsaB bind P700, the primary electron donor of photosystem I (PSI), as well as the electron acceptors A0, A1 and FX. PSI is a plastocyanin-ferredoxin oxidoreductase, converting photonic excitation into a charge separation, which transfers an electron from the donor P700 chlorophyll pair to the spectroscopically characterized acceptors A0, A1, FX, FA and FB in turn. Oxidized P700 is reduced on the lumenal side of the thylakoid membrane by plastocyanin. This chain is Photosystem I P700 chlorophyll a apoprotein A2, found in Lactuca sativa (Garden lettuce).